We begin with the raw amino-acid sequence, 95 residues long: MTKSELIERLASQQSHIPAKAVEDAVKEMLEHMASTLAQGERIEIRGFGSFSLHYRAPRTGRNPKTGDKVDLEGKYVPHFKPGKELRDRANIYGN.

The tract at residues 57-76 (APRTGRNPKTGDKVDLEGKY) is disordered. Basic and acidic residues predominate over residues 65–76 (KTGDKVDLEGKY).

This sequence belongs to the bacterial histone-like protein family. Heterodimer of an alpha and a beta chain.

Its function is as follows. This protein is one of the two subunits of integration host factor, a specific DNA-binding protein that functions in genetic recombination as well as in transcriptional and translational control. The chain is Integration host factor subunit beta from Enterobacter sp. (strain 638).